The following is a 356-amino-acid chain: 3-deoxy-alpha-D-manno-octulosonate 8-oxidase (356 aa).

This sequence belongs to the iron-containing alcohol dehydrogenase family. The cofactor is a divalent metal cation.

It catalyses the reaction 3-deoxy-alpha-D-manno-oct-2-ulosonate + O2 = 3,8-dideoxy-8-oxo-alpha-D-manno-octulosonate + H2O2. It participates in bacterial outer membrane biogenesis; lipopolysaccharide biosynthesis. With respect to regulation, inhibited by EDTA. Functionally, catalyzes the first step of the biosynthesis of Kdo8N (8-amino-3,8-dideoxy-D-manno-octulosonate) from Kdo (3-deoxy-D-manno-octulosonate). The sequence is that of 3-deoxy-alpha-D-manno-octulosonate 8-oxidase from Shewanella oneidensis (strain ATCC 700550 / JCM 31522 / CIP 106686 / LMG 19005 / NCIMB 14063 / MR-1).